Reading from the N-terminus, the 398-residue chain is Succinate--CoA ligase [ADP-forming] subunit beta (398 aa).

One can recognise an ATP-grasp domain in the interval 9-237 (RDLFETHGVP…AGGLDILELK (229 aa)). ATP is bound by residues Lys45, 52–54 (GRG), Ala94, and Glu99. Residues Asn191 and Asp205 each coordinate Mg(2+). Substrate contacts are provided by residues Asn257 and 319-321 (GIT).

This sequence belongs to the succinate/malate CoA ligase beta subunit family. As to quaternary structure, heterotetramer of two alpha and two beta subunits. It depends on Mg(2+) as a cofactor.

The enzyme catalyses succinate + ATP + CoA = succinyl-CoA + ADP + phosphate. It carries out the reaction GTP + succinate + CoA = succinyl-CoA + GDP + phosphate. It functions in the pathway carbohydrate metabolism; tricarboxylic acid cycle; succinate from succinyl-CoA (ligase route): step 1/1. Functionally, succinyl-CoA synthetase functions in the citric acid cycle (TCA), coupling the hydrolysis of succinyl-CoA to the synthesis of either ATP or GTP and thus represents the only step of substrate-level phosphorylation in the TCA. The beta subunit provides nucleotide specificity of the enzyme and binds the substrate succinate, while the binding sites for coenzyme A and phosphate are found in the alpha subunit. This chain is Succinate--CoA ligase [ADP-forming] subunit beta, found in Corynebacterium glutamicum (strain ATCC 13032 / DSM 20300 / JCM 1318 / BCRC 11384 / CCUG 27702 / LMG 3730 / NBRC 12168 / NCIMB 10025 / NRRL B-2784 / 534).